An 83-amino-acid chain; its full sequence is Small ribosomal subunit protein bS18 (83 aa).

Belongs to the bacterial ribosomal protein bS18 family. As to quaternary structure, part of the 30S ribosomal subunit. Forms a tight heterodimer with protein bS6.

In terms of biological role, binds as a heterodimer with protein bS6 to the central domain of the 16S rRNA, where it helps stabilize the platform of the 30S subunit. This chain is Small ribosomal subunit protein bS18, found in Desulfosudis oleivorans (strain DSM 6200 / JCM 39069 / Hxd3) (Desulfococcus oleovorans).